Here is a 178-residue protein sequence, read N- to C-terminus: Large ribosomal subunit protein bL25 (178 aa).

The protein belongs to the bacterial ribosomal protein bL25 family. CTC subfamily. In terms of assembly, part of the 50S ribosomal subunit; part of the 5S rRNA/L5/L18/L25 subcomplex. Contacts the 5S rRNA. Binds to the 5S rRNA independently of L5 and L18.

Its function is as follows. This is one of the proteins that binds to the 5S RNA in the ribosome where it forms part of the central protuberance. The chain is Large ribosomal subunit protein bL25 from Helicobacter pylori (strain Shi470).